The primary structure comprises 513 residues: 2,3-bisphosphoglycerate-independent phosphoglycerate mutase (513 aa).

Mn(2+) contacts are provided by Asp13 and Ser63. Residue Ser63 is the Phosphoserine intermediate of the active site. Substrate-binding positions include His124, 154 to 155, Arg186, Arg192, 262 to 265, and Lys335; these read RD and RADR. The Mn(2+) site is built by Asp402, His406, Asp443, His444, and His462.

This sequence belongs to the BPG-independent phosphoglycerate mutase family. Monomer. It depends on Mn(2+) as a cofactor.

The catalysed reaction is (2R)-2-phosphoglycerate = (2R)-3-phosphoglycerate. The protein operates within carbohydrate degradation; glycolysis; pyruvate from D-glyceraldehyde 3-phosphate: step 3/5. Its function is as follows. Catalyzes the interconversion of 2-phosphoglycerate and 3-phosphoglycerate. This chain is 2,3-bisphosphoglycerate-independent phosphoglycerate mutase, found in Shewanella amazonensis (strain ATCC BAA-1098 / SB2B).